Here is a 181-residue protein sequence, read N- to C-terminus: uncharacterized protein (181 aa).

The 159-residue stretch at 1–159 (MTVHHFTFHI…KACWMMQSLT (159 aa)) folds into the N-acetyltransferase domain.

The protein belongs to the acetyltransferase family.

This is an uncharacterized protein from Escherichia coli (strain K12).